Reading from the N-terminus, the 377-residue chain is 26S proteasome non-ATPase regulatory subunit 4 (377 aa).

Residues 5-188 (STMVCVDNSE…LADALISSPI (184 aa)) enclose the VWFA domain. K122 participates in a covalent cross-link: Glycyl lysine isopeptide (Lys-Gly) (interchain with G-Cter in SUMO2). The segment at 197-262 (LGLGASDFEF…TEDSDDALLK (66 aa)) is interaction with UBQLN1. Positions 211–230 (SADPELALALRVSMEEQRQR) constitute a UIM 1 domain. The tract at residues 216-220 (LALAL) is essential for ubiquitin-binding. A compositionally biased stretch (basic and acidic residues) spans 224 to 237 (MEEQRQRQEEEARR). Residues 224 to 255 (MEEQRQRQEEEARRAAAASAAEAGIATTGTED) form a disordered region. Phosphothreonine occurs at positions 250 and 253. S256 and S266 each carry phosphoserine. Residues 282 to 301 (TEEEQIAYAMQMSLQGAEFG) enclose the UIM 2 domain. The tract at residues 287–291 (IAYAM) is essential for ubiquitin-binding. 2 disordered regions span residues 300-327 (FGQAESADIDASSAMDTSEPAKEEDDYD) and 341-377 (NLPGVDPNNEAIRNAMGSLASQATKDGKKDKKEEDKK). 2 positions are modified to phosphoserine: S358 and S361. Positions 365–377 (KDGKKDKKEEDKK) are enriched in basic and acidic residues.

It belongs to the proteasome subunit S5A family. In terms of assembly, component of the 19S proteasome regulatory particle complex. The 26S proteasome consists of a 20S core particle (CP) and two 19S regulatory subunits (RP). The regulatory particle is made of a lid composed of 9 subunits, a base containing 6 ATPases and few additional components including PSMD4. Interacts with NUB1. Interacts with SQSTM1. Interacts with UBQLN4. Interacts with UBE3A. Interacts with UBQLN1 (via ubiquitin-like domain). Interacts with DDI2.

In terms of biological role, component of the 26S proteasome, a multiprotein complex involved in the ATP-dependent degradation of ubiquitinated proteins. This complex plays a key role in the maintenance of protein homeostasis by removing misfolded or damaged proteins, which could impair cellular functions, and by removing proteins whose functions are no longer required. Therefore, the proteasome participates in numerous cellular processes, including cell cycle progression, apoptosis, or DNA damage repair. PSMD4 acts as an ubiquitin receptor subunit through ubiquitin-interacting motifs and selects ubiquitin-conjugates for destruction. Displays a preferred selectivity for longer polyubiquitin chains. This Homo sapiens (Human) protein is 26S proteasome non-ATPase regulatory subunit 4 (PSMD4).